The following is a 318-amino-acid chain: Olfactory receptor 52D1 (318 aa).

Residues Met-1–Phe-28 lie on the Extracellular side of the membrane. N-linked (GlcNAc...) asparagine glycosylation occurs at Asn-5. The helical transmembrane segment at Trp-29–Ile-49 threads the bilayer. Topologically, residues Leu-50–Ala-57 are cytoplasmic. Residues Leu-58–Ser-78 traverse the membrane as a helical segment. Over Thr-79 to Ala-102 the chain is Extracellular. Cys-100 and Cys-192 are disulfide-bonded. Residues Gln-103 to Phe-123 form a helical membrane-spanning segment. At Asp-124–Ala-142 the chain is on the cytoplasmic side. A helical transmembrane segment spans residues Val-143–Ile-163. Over Phe-164–Ile-199 the chain is Extracellular. The chain crosses the membrane as a helical span at residues Val-200–Ser-220. At Tyr-221–Ala-240 the chain is on the cytoplasmic side. Residues Leu-241–Ser-261 traverse the membrane as a helical segment. At Phe-262 to His-277 the chain is on the extracellular side. The helical transmembrane segment at Ile-278 to Ala-298 threads the bilayer. Topologically, residues Arg-299 to Ile-318 are cytoplasmic.

Belongs to the G-protein coupled receptor 1 family.

It localises to the cell membrane. Functionally, odorant receptor. This Homo sapiens (Human) protein is Olfactory receptor 52D1 (OR52D1).